A 662-amino-acid polypeptide reads, in one-letter code: High affinity sulfate transporter 2 (662 aa).

Positions 1 to 35 (MSQRVSDQAMAEVIAETRTNSSSRRHGGGDDTPSL) are disordered. Transmembrane regions (helical) follow at residues 103 to 123 (GDFI…LAYA), 128 to 148 (LDPW…AFMG), 153 to 173 (IAIG…SNEI), 182 to 202 (LRLA…LGVC), 205 to 225 (GFLI…GAAI), 264 to 284 (WETI…KYIA), 291 to 311 (FWVS…FVYI), 346 to 366 (AGVR…MAIG), 383 to 403 (MVAM…VTTG), 420 to 440 (VSNI…TPLF), 447 to 467 (VLAS…AMVL), and 481 to 501 (GAFF…AVAI). Residues 532 to 655 (QYPKAEQIPG…LTVADAVATY (124 aa)) enclose the STAS domain.

This sequence belongs to the SLC26A/SulP transporter (TC 2.A.53) family.

Its subcellular location is the membrane. Its function is as follows. High-affinity H(+)/sulfate cotransporter that mediates the uptake of sulfate by plant roots from low concentrations of sulfate in the soil solution. The chain is High affinity sulfate transporter 2 (ST2) from Stylosanthes hamata (Caribbean stylo).